The primary structure comprises 64 residues: MPKMKTNRGAAKRFKVKKSGKIKRGAAYRSHILTKKSQKRKRNLRAPKYVDSTNIKAVRELLAI.

Residues 1–21 (MPKMKTNRGAAKRFKVKKSGK) are disordered. The span at 10-21 (AAKRFKVKKSGK) shows a compositional bias: basic residues.

The protein belongs to the bacterial ribosomal protein bL35 family.

This is Large ribosomal subunit protein bL35 from Nautilia profundicola (strain ATCC BAA-1463 / DSM 18972 / AmH).